Here is a 148-residue protein sequence, read N- to C-terminus: uncharacterized protein (148 aa).

3 consecutive transmembrane segments (helical) span residues 20–42, 52–74, and 118–135; these read YYSK…IANY, YFLM…VRCY, and IIRY…CTYI.

Its subcellular location is the cell membrane. This is an uncharacterized protein from Rickettsia prowazekii (strain Madrid E).